Here is a 183-residue protein sequence, read N- to C-terminus: Ferritin heavy chain (183 aa).

An N-acetylmethionine modification is found at Met-1. An N-acetylthreonine; in Ferritin heavy chain, N-terminally processed modification is found at Thr-2. Residues 11–160 (QNYHQDSEAA…DHVTNLRKMG (150 aa)) enclose the Ferritin-like diiron domain. 5 residues coordinate Fe cation: Glu-28, Glu-63, His-66, Glu-108, and Gln-142. 2 positions are modified to phosphoserine: Ser-179 and Ser-183.

The protein belongs to the ferritin family. Oligomer of 24 subunits. There are two types of subunits: L (light) chain and H (heavy) chain. The major chain can be light or heavy, depending on the species and tissue type. In the human liver, the heavy chain is predominant. The functional molecule forms a roughly spherical shell with a diameter of 12 nm and contains a central cavity into which the insoluble mineral iron core is deposited. Interacts with NCOA4; NCOA4 promotes targeting of the iron-binding ferritin complex to autolysosomes following starvation or iron depletion. In terms of tissue distribution, expressed in the liver.

The protein resides in the cytoplasm. It localises to the lysosome. Its subcellular location is the cytoplasmic vesicle. It is found in the autophagosome. It carries out the reaction 4 Fe(2+) + O2 + 4 H(+) = 4 Fe(3+) + 2 H2O. In terms of biological role, stores iron in a soluble, non-toxic, readily available form. Important for iron homeostasis. Has ferroxidase activity. Iron is taken up in the ferrous form and deposited as ferric hydroxides after oxidation. Also plays a role in delivery of iron to cells. Mediates iron uptake in capsule cells of the developing kidney. Delivery to lysosomes is mediated by the cargo receptor NCOA4 for autophagic degradation and release of iron. This chain is Ferritin heavy chain (FTH1), found in Homo sapiens (Human).